A 152-amino-acid chain; its full sequence is Ribosome maturation factor RimP (152 aa).

The protein belongs to the RimP family.

The protein localises to the cytoplasm. In terms of biological role, required for maturation of 30S ribosomal subunits. This is Ribosome maturation factor RimP from Pectobacterium atrosepticum (strain SCRI 1043 / ATCC BAA-672) (Erwinia carotovora subsp. atroseptica).